The sequence spans 257 residues: Diphthine synthase (257 aa).

Residues leucine 9, aspartate 85, valine 88, 113–114 (SI), leucine 164, alanine 207, and histidine 232 contribute to the S-adenosyl-L-methionine site.

This sequence belongs to the diphthine synthase family. As to quaternary structure, homodimer.

The enzyme catalyses 2-[(3S)-amino-3-carboxypropyl]-L-histidyl-[translation elongation factor 2] + 3 S-adenosyl-L-methionine = diphthine-[translation elongation factor 2] + 3 S-adenosyl-L-homocysteine + 3 H(+). It participates in protein modification; peptidyl-diphthamide biosynthesis. In terms of biological role, S-adenosyl-L-methionine-dependent methyltransferase that catalyzes the trimethylation of the amino group of the modified target histidine residue in translation elongation factor 2 (EF-2), to form an intermediate called diphthine. The three successive methylation reactions represent the second step of diphthamide biosynthesis. The protein is Diphthine synthase of Methanococcus aeolicus (strain ATCC BAA-1280 / DSM 17508 / OCM 812 / Nankai-3).